We begin with the raw amino-acid sequence, 805 residues long: Polyribonucleotide nucleotidyltransferase (805 aa).

2 residues coordinate Mg(2+): Asp491 and Asp497. Residues 558-617 (PRMESMIIDKNKIKNVIGTGGKNVREICEKTGVKIEISQDGTVMIYAVSRDAVEEAKNMI) form the KH domain. One can recognise an S1 motif domain in the interval 627-694 (GKVFSGVISE…DKDHVQLSMR (68 aa)). The tract at residues 702-805 (DLLEHESYSS…GGGNKKPRFF (104 aa)) is disordered. Over residues 709–721 (YSSSKKNGPQSGD) the composition is skewed to polar residues.

Belongs to the polyribonucleotide nucleotidyltransferase family. It depends on Mg(2+) as a cofactor.

The protein resides in the cytoplasm. The catalysed reaction is RNA(n+1) + phosphate = RNA(n) + a ribonucleoside 5'-diphosphate. Functionally, involved in mRNA degradation. Catalyzes the phosphorolysis of single-stranded polyribonucleotides processively in the 3'- to 5'-direction. This is Polyribonucleotide nucleotidyltransferase from Anaplasma marginale (strain St. Maries).